A 210-amino-acid chain; its full sequence is Molybdenum cofactor guanylyltransferase (210 aa).

GTP is bound by residues 14-16 (LAG), Lys27, Asn55, Asp73, and Asp108. Mg(2+) is bound at residue Asp108.

The protein belongs to the MobA family. Monomer. Mg(2+) serves as cofactor.

The protein localises to the cytoplasm. The enzyme catalyses Mo-molybdopterin + GTP + H(+) = Mo-molybdopterin guanine dinucleotide + diphosphate. In terms of biological role, transfers a GMP moiety from GTP to Mo-molybdopterin (Mo-MPT) cofactor (Moco or molybdenum cofactor) to form Mo-molybdopterin guanine dinucleotide (Mo-MGD) cofactor. The polypeptide is Molybdenum cofactor guanylyltransferase (Rhodopseudomonas palustris (strain BisB5)).